The sequence spans 1533 residues: Protein TALPID3 (1533 aa).

A disordered region spans residues 32 to 57; it reads LSANKRLPVGTGTSLNGTSRGSSDLT. Positions 42-57 are enriched in polar residues; the sequence is TGTSLNGTSRGSSDLT. Positions 182–223 form a coiled coil; that stretch reads QSDLEAKVNSVTELLSKLQETDKHLQRVTEQQTSIQRKQEKL. Positions 309–321 are enriched in basic and acidic residues; sequence KEVEDTSFDKQKS. Disordered stretches follow at residues 309 to 339 and 377 to 400; these read KEVE…VSRD and LTRK…TPEK. S406 carries the post-translational modification Phosphoserine. Residues 467-501 are a coiled coil; it reads SVLKDAEKILRGVQNNKKVLEENLEAIIRAKDGAA. The interval 467 to 554 is required for centrosomal localization; that stretch reads SVLKDAEKIL…YEQKRFDQKN (88 aa). A disordered region spans residues 546-575; that stretch reads EQKRFDQKNQRTKKGQNMTKDIRTNTQDKT. The segment covering 560–575 has biased composition (polar residues); that stretch reads GQNMTKDIRTNTQDKT. Phosphothreonine occurs at positions 1042 and 1046. S1050 bears the Phosphoserine mark. T1063 bears the Phosphothreonine mark. Phosphoserine is present on S1066. Residues 1129–1156 are disordered; the sequence is SSPELPKPWGDGDLPLEEENPNSPQEEL.

It belongs to the TALPID3 family. As to quaternary structure, interacts with CCP110, CEP290, CEP97, KIF24. Ubiquitously expressed. Expressed in photoreceptor cells (at protein level).

It is found in the cytoplasm. Its subcellular location is the cytoskeleton. The protein localises to the microtubule organizing center. It localises to the centrosome. The protein resides in the photoreceptor inner segment. It is found in the centriole. Its subcellular location is the cilium basal body. Its function is as follows. Required for ciliogenesis and sonic hedgehog/SHH signaling. Required for the centrosomal recruitment of RAB8A and for the targeting of centriole satellite proteins to centrosomes such as of PCM1. May play a role in early ciliogenesis in the disappearance of centriolar satellites that preceeds ciliary vesicle formation. Involved in regulation of cell intracellular organization. Involved in regulation of cell polarity. Required for asymmetrical localization of CEP120 to daughter centrioles. The protein is Protein TALPID3 (KIAA0586) of Homo sapiens (Human).